A 103-amino-acid chain; its full sequence is A-type ATP synthase subunit F (103 aa).

This sequence belongs to the V-ATPase F subunit family. As to quaternary structure, has multiple subunits with at least A(3), B(3), C, D, E, F, H, I and proteolipid K(x).

The protein localises to the cell membrane. Component of the A-type ATP synthase that produces ATP from ADP in the presence of a proton gradient across the membrane. The sequence is that of A-type ATP synthase subunit F from Pyrococcus furiosus (strain ATCC 43587 / DSM 3638 / JCM 8422 / Vc1).